The sequence spans 339 residues: 4-hydroxy-2-oxovalerate aldolase (339 aa).

A Pyruvate carboxyltransferase domain is found at I8–M260. R16–D17 is a binding site for substrate. Residue D17 coordinates Mn(2+). H20 (proton acceptor) is an active-site residue. Residues S170 and H199 each coordinate substrate. Mn(2+) contacts are provided by H199 and H201. Y290 contributes to the substrate binding site.

It belongs to the 4-hydroxy-2-oxovalerate aldolase family.

The enzyme catalyses (S)-4-hydroxy-2-oxopentanoate = acetaldehyde + pyruvate. The polypeptide is 4-hydroxy-2-oxovalerate aldolase (Shewanella woodyi (strain ATCC 51908 / MS32)).